The following is a 91-amino-acid chain: Acylphosphatase (91 aa).

One can recognise an Acylphosphatase-like domain in the interval Thr-3–Pro-89. Residues Arg-18 and Asn-36 contribute to the active site.

Belongs to the acylphosphatase family.

The enzyme catalyses an acyl phosphate + H2O = a carboxylate + phosphate + H(+). The sequence is that of Acylphosphatase (acyP) from Rhodospirillum rubrum (strain ATCC 11170 / ATH 1.1.1 / DSM 467 / LMG 4362 / NCIMB 8255 / S1).